The chain runs to 1807 residues: Vitellogenin-A2 (1807 aa).

A signal peptide spans 1–15 (MKGIVLALLLALAGS). The 641-residue stretch at 24-664 (FSESKISVYN…SANTMFPVFI (641 aa)) folds into the Vitellogenin domain. Residues 953 to 974 (TSAEGASMMEDSSEMGPKKYSA) are disordered. The N-linked (GlcNAc...) asparagine glycan is linked to Asn-1094. The tract at residues 1095 to 1320 (ETALYRSKQK…SSESSSSSSE (226 aa)) is disordered. Basic residues predominate over residues 1101-1111 (SKQKKKNKIHN). The segment covering 1112-1123 (RRLDAEVVEARK) has biased composition (basic and acidic residues). The segment covering 1126–1163 (SSLSSSSSSSSSSSSSSSSSSSSSSSSSPSSSSSSSYS) has biased composition (low complexity). Positions 1187-1198 (QNKKRNLQENRK) are enriched in basic and acidic residues. Low complexity predominate over residues 1205-1232 (SSSSSSSSSSSSSSSSSSSSSSSSSSSS). The span at 1233 to 1247 (EENRPHKNRQHDNKQ) shows a compositional bias: basic and acidic residues. 2 stretches are compositionally biased toward low complexity: residues 1263-1276 (SESS…SSSE) and 1309-1320 (SSSSESSSSSSE). A VWFD domain is found at 1536 to 1714 (GECKVAQDQI…SWILPAESCS (179 aa)). 2 disulfides stabilise this stretch: Cys-1538-Cys-1677 and Cys-1561-Cys-1713.

Produced by the liver, secreted into the blood and then sequestered by receptor mediated endocytosis into growing oocytes, where it is generally cleaved, giving rise to the respective yolk components.

Precursor of the major egg-yolk proteins that are sources of nutrients during early development of oviparous organisms. In Xenopus laevis (African clawed frog), this protein is Vitellogenin-A2.